The following is a 154-amino-acid chain: Snaclec EMS16 subunit beta (154 aa).

A signal peptide spans 1–26; that stretch reads MGRLISVRFSLLVVFLSLSGIGAGLC. A disulfide bridge links Cys27 with Cys38. Positions 34–147 constitute a C-type lectin domain; the sequence is FDQHCYKVFE…CEKSVSFVCK (114 aa). Asn47 is a glycosylation site (N-linked (GlcNAc...) asparagine). Disulfide bonds link Cys55–Cys146 and Cys121–Cys138.

The protein belongs to the snaclec family. As to quaternary structure, heterodimer of subunits A and B; disulfide-linked. As to expression, expressed by the venom gland.

Its subcellular location is the secreted. EMS16 is a potent and selective inhibitor of alpha-2/beta-1 (ITGA2/ITGB1) integrin and acts as a potent antagonist of platelet aggregation and cell migration. Binds specifically to the I domain of the alpha-2 subunit, in a metal ion-independent fashion. The chain is Snaclec EMS16 subunit beta from Echis multisquamatus (Central Asian sand viper).